A 325-amino-acid polypeptide reads, in one-letter code: Zinc metalloproteinase/disintegrin (325 aa).

The propeptide occupies 1 to 39 (KYENVEKGDEAPKKCGVTHTNLESDEPIEKASQLFGTSE). The residue at position 40 (Q40) is a Pyrrolidone carboxylic acid. Residues 46–242 (RHIELVIVAD…HNPQRILNEP (197 aa)) enclose the Peptidase M12B domain. H182 contacts Zn(2+). The active site involves E183. The Zn(2+) site is built by H186 and H192. 2 disulfides stabilise this stretch: C197–C221 and C199–C204. The propeptide occupies 243 to 257 (LRTDTVSTPVYGNVL). Positions 250–322 (TPVYGNVLQN…SECESNPWNF (73 aa)) constitute a Disintegrin domain. At Q258 the chain carries Pyrrolidone carboxylic acid. 4 cysteine pairs are disulfide-bonded: C264–C287, C278–C284, C283–C308, and C296–C315. The Cell attachment site motif lies at 300–302 (RGD).

Belongs to the venom metalloproteinase (M12B) family. P-II subfamily. P-IIe sub-subfamily. As to quaternary structure, heterodimer of bitisgabonin and gabonin-1 (bitisgabonin-1) or gabonin-2 (bitisgabonin-2); disulfide-linked. Zn(2+) is required as a cofactor. As to expression, expressed by the venom gland.

It localises to the secreted. Functionally, impairs hemostasis in the envenomed animal. Its function is as follows. In dimer with gabonin-1 (bitisgabonin-1), is a potent inhibitor of the adhesion of the RGD-dependent integrin alpha-5/beta-1 (ITGA5/ITGB1) to immobilized fibronectin. In dimer with gabonin-2 (bitisgabonin-2), preferentially inhibits the adhesion of the alpha-4/beta-1 (ITGA4/ITGB1) and alpha-9/beta-1 (ITGA9/ITGB1) integrins to VCAM-1 and also acts as a strong antagonist of alpha-5/beta-1 (ITGA5/ITGB1). The chain is Zinc metalloproteinase/disintegrin from Bitis gabonica (Gaboon adder).